We begin with the raw amino-acid sequence, 151 residues long: Large ribosomal subunit protein bL9 (151 aa).

It belongs to the bacterial ribosomal protein bL9 family.

Binds to the 23S rRNA. This chain is Large ribosomal subunit protein bL9, found in Azoarcus sp. (strain BH72).